The sequence spans 121 residues: NAD(P)H-quinone oxidoreductase subunit M (121 aa).

The protein belongs to the complex I NdhM subunit family. In terms of assembly, NDH-1 can be composed of about 15 different subunits; different subcomplexes with different compositions have been identified which probably have different functions.

The protein localises to the cellular thylakoid membrane. It carries out the reaction a plastoquinone + NADH + (n+1) H(+)(in) = a plastoquinol + NAD(+) + n H(+)(out). The catalysed reaction is a plastoquinone + NADPH + (n+1) H(+)(in) = a plastoquinol + NADP(+) + n H(+)(out). In terms of biological role, NDH-1 shuttles electrons from an unknown electron donor, via FMN and iron-sulfur (Fe-S) centers, to quinones in the respiratory and/or the photosynthetic chain. The immediate electron acceptor for the enzyme in this species is believed to be plastoquinone. Couples the redox reaction to proton translocation, and thus conserves the redox energy in a proton gradient. Cyanobacterial NDH-1 also plays a role in inorganic carbon-concentration. The chain is NAD(P)H-quinone oxidoreductase subunit M from Nostoc punctiforme (strain ATCC 29133 / PCC 73102).